The primary structure comprises 311 residues: ATP synthase gamma chain (311 aa).

A disulfide bond links Cys67 and Cys138.

Belongs to the ATPase gamma chain family. As to quaternary structure, F-type ATPases have 2 components, CF(1) - the catalytic core - and CF(0) - the membrane proton channel. CF(1) has five subunits: alpha(3), beta(3), gamma(1), delta(1), epsilon(1). CF(0) has three main subunits: a, b and c.

The protein localises to the cellular thylakoid membrane. With respect to regulation, thiol-modulation by raising the activation threshold of the enzyme upon oxidation of the cysteines, thereby preventing wasteful ATP-hydrolysis. In terms of biological role, produces ATP from ADP in the presence of a proton gradient across the membrane. The gamma chain is believed to be important in regulating ATPase activity and the flow of protons through the CF(0) complex. In Arthrospira platensis (Spirulina platensis), this protein is ATP synthase gamma chain (atpG).